Reading from the N-terminus, the 514-residue chain is Proline--tRNA ligase (514 aa).

The protein belongs to the class-II aminoacyl-tRNA synthetase family. ProS type 3 subfamily. In terms of assembly, homodimer.

It is found in the cytoplasm. The catalysed reaction is tRNA(Pro) + L-proline + ATP = L-prolyl-tRNA(Pro) + AMP + diphosphate. In terms of biological role, catalyzes the attachment of proline to tRNA(Pro) in a two-step reaction: proline is first activated by ATP to form Pro-AMP and then transferred to the acceptor end of tRNA(Pro). In Erythrobacter litoralis (strain HTCC2594), this protein is Proline--tRNA ligase.